Here is an 84-residue protein sequence, read N- to C-terminus: Putative regulatory protein Dde_2720 (84 aa).

It belongs to the RemA family.

This Oleidesulfovibrio alaskensis (strain ATCC BAA-1058 / DSM 17464 / G20) (Desulfovibrio alaskensis) protein is Putative regulatory protein Dde_2720.